The primary structure comprises 432 residues: MAVWALGINHTTAPLDLRGRFAFAIDQIAPTLQGLRQSLGGATRHPQVETAILSTCNRTEIYCAGQQPALDHTLDWLAHSGGVSPSLLRSHSYTLEESLVARHAFRVASGLDSMVLGEAQILGQMKDAVRAAETAGALGTTLNQLFQRSFAVAKEVRTSTEIGAHSISMAAAAVRLAGQLFEDLTEIRILFVGAGEMIELAATHFAAKNPKSLAIANRTLERGEKLASRFGGEVMRLADLPDRLHEFDAVVSCTASSLPIIGLGAVERALKKRRHRPMFMVDLAVPRDIEPEVKALEDIYLYTVDDLASVVQTAQASRQAAVAQAEAIIDAGVQSFMHWMDQRSPVGGVVPLIQQIHAQADEWRALEIARAKKLIARGEDMDAVLEALSRGLTQKMLHGTLAELRAGDADTRAQTAQTVSRLFLRSQSRSGL.

Substrate contacts are provided by residues 55–58 (TCNR), Ser-113, 118–120 (EAQ), and Gln-124. Catalysis depends on Cys-56, which acts as the Nucleophile. An NADP(+)-binding site is contributed by 193-198 (GAGEMI).

It belongs to the glutamyl-tRNA reductase family. As to quaternary structure, homodimer.

The enzyme catalyses (S)-4-amino-5-oxopentanoate + tRNA(Glu) + NADP(+) = L-glutamyl-tRNA(Glu) + NADPH + H(+). It functions in the pathway porphyrin-containing compound metabolism; protoporphyrin-IX biosynthesis; 5-aminolevulinate from L-glutamyl-tRNA(Glu): step 1/2. Catalyzes the NADPH-dependent reduction of glutamyl-tRNA(Glu) to glutamate 1-semialdehyde (GSA). In Paracidovorax citrulli (strain AAC00-1) (Acidovorax citrulli), this protein is Glutamyl-tRNA reductase.